The sequence spans 442 residues: Threonine/serine transporter TdcC (442 aa).

11 consecutive transmembrane segments (helical) span residues 21 to 41 (TTWT…FFPI), 44 to 64 (GFGG…IAFL), 96 to 116 (GVVI…IYGV), 139 to 159 (VVAL…KDLM), 162 to 182 (VMSF…LSLI), 206 to 226 (ILVT…FSPI), 258 to 278 (ASIL…FTLS), 312 to 332 (ITLE…SFFG), 364 to 384 (LISM…NPNI), 388 to 408 (IEAM…MYAI), and 422 to 442 (ENYF…YKLL).

This sequence belongs to the amino acid/polyamine transporter 2 family. SdaC/TdcC subfamily.

It is found in the cell inner membrane. It catalyses the reaction L-threonine(in) + H(+)(in) = L-threonine(out) + H(+)(out). The catalysed reaction is L-serine(in) + H(+)(in) = L-serine(out) + H(+)(out). In terms of biological role, involved in the import of threonine and serine into the cell, with the concomitant import of a proton (symport system). The chain is Threonine/serine transporter TdcC from Yersinia enterocolitica serotype O:8 / biotype 1B (strain NCTC 13174 / 8081).